Here is an 86-residue protein sequence, read N- to C-terminus: uncharacterized protein (86 aa).

An N-terminal signal peptide occupies residues 1–31; the sequence is MKQKLLLSGLAVSTVGITSYLLKDPSNRQKA. The disordered stretch occupies residues 46–69; the sequence is PDMETFPVDKAGHPDPQDIEDNKM. Residues 55 to 69 show a composition bias toward basic and acidic residues; sequence KAGHPDPQDIEDNKM.

This is an uncharacterized protein from Bacillus subtilis (strain 168).